Consider the following 340-residue polypeptide: Capsid protein alpha (340 aa).

A disordered region spans residues 1 to 39 (MVRKGDKKLAKPPTTKAANSQPRRRATQRRRSGRADAPL). The segment covering 22 to 32 (PRRRATQRRRS) has biased composition (basic residues).

The protein belongs to the peptidase A6 family.

Its subcellular location is the virion. Functionally, capsid protein alpha self-assembles to form an icosahedral procapsid with a T=3 symmetry, about 30 nm in diameter, and consisting of 60 capsid proteins trimers. The capsid encapsulates the two genomic RNAs. This chain is Capsid protein alpha (alpha), found in Striped jack nervous necrosis virus (SjNNV).